A 390-amino-acid polypeptide reads, in one-letter code: S-adenosylmethionine synthase 3 (390 aa).

A Mg(2+)-binding site is contributed by glutamate 9. Position 15 (histidine 15) interacts with ATP. A K(+)-binding site is contributed by glutamate 43. Positions 56 and 99 each coordinate L-methionine. Residues 167–169 (DGK), 235–238 (SGRF), aspartate 246, 252–253 (RK), alanine 269, lysine 273, and lysine 277 each bind ATP. Aspartate 246 is an L-methionine binding site. Lysine 277 is an L-methionine binding site.

This sequence belongs to the AdoMet synthase family. Homotetramer. Interacts with GRF3. Mn(2+) is required as a cofactor. The cofactor is Mg(2+). Co(2+) serves as cofactor. It depends on K(+) as a cofactor.

The protein resides in the cytoplasm. The enzyme catalyses L-methionine + ATP + H2O = S-adenosyl-L-methionine + phosphate + diphosphate. It participates in amino-acid biosynthesis; S-adenosyl-L-methionine biosynthesis; S-adenosyl-L-methionine from L-methionine: step 1/1. Inhibited by 5,5'-dithiobis-2-nitrobenzoic acid (DTNB) and N-ethylmaleimide (NEM) (in vitro). Its function is as follows. Catalyzes the formation of S-adenosylmethionine from methionine and ATP. The reaction comprises two steps that are both catalyzed by the same enzyme: formation of S-adenosylmethionine (AdoMet) and triphosphate, and subsequent hydrolysis of the triphosphate. Involved in the biosynthesis of lignin. The sequence is that of S-adenosylmethionine synthase 3 (METK3) from Arabidopsis thaliana (Mouse-ear cress).